A 74-amino-acid polypeptide reads, in one-letter code: Defensin-like protein 39 (74 aa).

Positions 1–28 are cleaved as a signal peptide; it reads MEKKSLAALSFLLLLVLFVAQEIVVTEA. 4 disulfide bridges follow: Cys-31–Cys-74, Cys-42–Cys-63, Cys-48–Cys-68, and Cys-52–Cys-70.

This sequence belongs to the DEFL family. In terms of tissue distribution, pods.

Its subcellular location is the secreted. Its function is as follows. Possesses antifungal activity. This chain is Defensin-like protein 39 (PI39), found in Pisum sativum (Garden pea).